A 153-amino-acid chain; its full sequence is 6,7-dimethyl-8-ribityllumazine synthase (153 aa).

5-amino-6-(D-ribitylamino)uracil contacts are provided by residues Phe-22, 56-58 (AFE), and 80-82 (CVI). 85–86 (AT) is a binding site for (2S)-2-hydroxy-3-oxobutyl phosphate. His-88 functions as the Proton donor in the catalytic mechanism. 5-amino-6-(D-ribitylamino)uracil is bound at residue Phe-113. Residue Arg-127 participates in (2S)-2-hydroxy-3-oxobutyl phosphate binding.

This sequence belongs to the DMRL synthase family.

It catalyses the reaction (2S)-2-hydroxy-3-oxobutyl phosphate + 5-amino-6-(D-ribitylamino)uracil = 6,7-dimethyl-8-(1-D-ribityl)lumazine + phosphate + 2 H2O + H(+). It functions in the pathway cofactor biosynthesis; riboflavin biosynthesis; riboflavin from 2-hydroxy-3-oxobutyl phosphate and 5-amino-6-(D-ribitylamino)uracil: step 1/2. Its function is as follows. Catalyzes the formation of 6,7-dimethyl-8-ribityllumazine by condensation of 5-amino-6-(D-ribitylamino)uracil with 3,4-dihydroxy-2-butanone 4-phosphate. This is the penultimate step in the biosynthesis of riboflavin. In Endomicrobium trichonymphae, this protein is 6,7-dimethyl-8-ribityllumazine synthase.